Reading from the N-terminus, the 236-residue chain is Three prime repair exonuclease 2 (236 aa).

Positions 14 and 16 each coordinate Mg(2+). Substrate-binding positions include 16 to 17 (EA) and tyrosine 122. Histidine 188 functions as the Proton donor/acceptor in the catalytic mechanism. Aspartate 193 lines the Mg(2+) pocket. Aspartate 193 is a binding site for substrate.

This sequence belongs to the exonuclease superfamily. TREX family. In terms of assembly, homodimer. It depends on Mg(2+) as a cofactor. As to expression, detected in heart, breast, prostate, skeletal muscle, testis, uterus, bone marrow, colon, small intestine, stomach and thymus.

The protein localises to the nucleus. The enzyme catalyses Exonucleolytic cleavage in the 3'- to 5'-direction to yield nucleoside 5'-phosphates.. Its function is as follows. Exonuclease with a preference for double-stranded DNA with mismatched 3' termini. May play a role in DNA repair. The sequence is that of Three prime repair exonuclease 2 (TREX2) from Homo sapiens (Human).